We begin with the raw amino-acid sequence, 483 residues long: Phloretin 2'-O-glucosyltransferase (483 aa).

H15 acts as the Proton acceptor in catalysis. H15 provides a ligand contact to an anthocyanidin. Catalysis depends on D118, which acts as the Charge relay. 8 residues coordinate UDP-alpha-D-glucose: T140, A360, Q362, H377, W380, N381, S382, and E385. A400 is an an anthocyanidin binding site. UDP-alpha-D-glucose-binding residues include E401 and Q402.

It belongs to the UDP-glycosyltransferase family. As to expression, highly expressed in roots and at lower levels in leaves, flowers and fruits.

It carries out the reaction phloretin + UDP-alpha-D-glucose = phlorizin + UDP + H(+). In terms of biological role, glycosyltransferase that possesses phloretin 2'-O-glycosyltransferase activity. Converts phloretin to phlorizin (phloretin 2'-O-glucoside), a potent antioxidant. Is specific for phloretin and does not possess glycosyltransferase activity toward caffeic acid, catechin, chlorogenic acid, 2-coumaric acid, 3-coumaric acid, 4-coumaric acid, cyanidin, 3,4-dihydroxyhydrocinnamic acid, epicatechin, 3-hydroxybenzoic acid, naringenin, 3,4-dihydroxybenzoic acid, quercetin and rutin. Can glycosylate phloretin in the presence of UDP-glucose, UDP-xylose and UDP-galactose. In Malus domestica (Apple), this protein is Phloretin 2'-O-glucosyltransferase.